Reading from the N-terminus, the 22-residue chain is Peroxidase 5 (22 aa).

Belongs to the peroxidase family. Classical plant (class III) peroxidase subfamily. Heme b serves as cofactor. Requires Ca(2+) as cofactor.

It localises to the secreted. It is found in the cell wall. The catalysed reaction is 2 a phenolic donor + H2O2 = 2 a phenolic radical donor + 2 H2O. In terms of biological role, removal of H(2)O(2), oxidation of toxic reductants, biosynthesis and degradation of lignin, suberization, auxin catabolism, response to environmental stresses such as wounding, pathogen attack and oxidative stress. These functions might be dependent on each isozyme/isoform in each plant tissue. The polypeptide is Peroxidase 5 (Cycas revoluta (Sago palm)).